The chain runs to 982 residues: MAFAVWFLSTFVIVAAQRHMALEHEGTYNIGGVLTNSDSEEHFRTTIAHLNFDQQYVPRKVTYYEKTIRMDKNPIKTVFNVCNKLIEKRVYAVVVSHEQTSGDLSPAAVSYTSGFYSIPVIGISSRDAAFSDKNIHVSFLRTVPPYYHQADVWLEMLSHFSYTKVIIIHSSDTDGRAILGRFQTTSQTYYDDVDVRATVEMIVEFEPKLTSFSEHLTYMKTAQSRVYLMYASTEDAQIIFRDARDHNMTQEGHVWIVTEQALFANNTPEGVLGLQLEHAHSDKGHIRDSVYVLASAIKEMISNETIAEAPKDCGDSAVNWESGKRLFQYLKTRNITGETGQVAFDDNGDRIYAGYDVINIRENQKQHVVGKFSYDNMRAKMRMKINDSEIIWAGKQKRKPEGIMIPTHLKLLTIEEKPFVYVRRMGDDEFHCEPNERPCPLFNTTDATANEFCCSGYCIDLLIELAKRINFTYDLALSPDGQFGHYILRNNTGATLRKEWTGLIGQLVNERADMIVAPLTINPERAEYIEFSKPFKYQGITILEKKPSRSSTLVSFLQPFSNTLWILVMVSVHVVALVLYLLDRFSPFGRFKLSHSDSNEEKALNLSSAVWFAWGVLLNSGIGEGTPRSFSARVLGMVWAGFAMIIVASYTANLAAFLVLERPKTKLSGINDARLRNTMENLTCATVKGSSVDMYFRRQVELSNMYRTMEANNYATAEHAIQDVKKGKLMAFIWDSSRLEYEASKDCELVTAGELFGRSGYGIGLQKGSPWTDAVTLAILEFHESGFMEKLDKQWIFHGHVQQNCELFEKTPNTLGLKNMAGVFILVGVGIAGGVGLIIIEVIYKKHQVKKQKRLDIARHAADKWRGTIEKRKTIRASLAMQRQYNVGLNSRAPGTISLAVDKKRYPRLSQRMGPERAWPGDAAEVLRMRRPYEIGKPGQSPKVIGGPPHPMLGKTRPQAQQNLLPPRYSPGYTSDVSHLVV.

The first 16 residues, 1–16 (MAFAVWFLSTFVIVAA), serve as a signal peptide directing secretion. Residues 17–561 (QRHMALEHEG…TLVSFLQPFS (545 aa)) lie on the Extracellular side of the membrane. Asparagine 247, asparagine 303, asparagine 334, asparagine 386, asparagine 443, asparagine 470, and asparagine 490 each carry an N-linked (GlcNAc...) asparagine glycan. Residues 518 to 520 (PLT) and arginine 525 contribute to the glycine site. Residues 562–582 (NTLWILVMVSVHVVALVLYLL) traverse the membrane as a helical segment. Residues 583–639 (DRFSPFGRFKLSHSDSNEEKALNLSSAVWFAWGVLLNSGIGEGTPRSFSARVLGMVW) lie on the Cytoplasmic side of the membrane. Residues 640–660 (AGFAMIIVASYTANLAAFLVL) form a helical membrane-spanning segment. The Extracellular segment spans residues 661-819 (ERPKTKLSGI…KTPNTLGLKN (159 aa)). The N-linked (GlcNAc...) asparagine glycan is linked to asparagine 681. The glycine site is built by serine 691 and aspartate 735. A helical transmembrane segment spans residues 820–840 (MAGVFILVGVGIAGGVGLIII). Residues 841–982 (EVIYKKHQVK…YTSDVSHLVV (142 aa)) are Cytoplasmic-facing. The interval 934–982 (EIGKPGQSPKVIGGPPHPMLGKTRPQAQQNLLPPRYSPGYTSDVSHLVV) is disordered. Polar residues predominate over residues 972-982 (GYTSDVSHLVV).

It belongs to the glutamate-gated ion channel (TC 1.A.10.1) family. As to quaternary structure, forms a heteromeric NMDA channel with Nmdar2.

The protein resides in the cell membrane. The protein localises to the postsynaptic cell membrane. It is found in the postsynaptic density. Functionally, NMDA receptor subtype of glutamate-gated ion channels with high calcium permeability and voltage-dependent sensitivity to magnesium. Mediated by glycine. This protein plays a key role in synaptic plasticity, synaptogenesis, excitotoxicity, memory acquisition and learning. It mediates neuronal functions in glutamate neurotransmission. Is involved in the cell surface targeting of NMDA receptors. Plays a role in associative learning and in long-term memory consolidation. The protein is Glutamate [NMDA] receptor subunit 1 of Drosophila willistoni (Fruit fly).